A 296-amino-acid polypeptide reads, in one-letter code: Homoserine kinase (296 aa).

85-95 provides a ligand contact to ATP; it reads PVARGLGSSAA.

The protein belongs to the GHMP kinase family. Homoserine kinase subfamily.

The protein localises to the cytoplasm. The enzyme catalyses L-homoserine + ATP = O-phospho-L-homoserine + ADP + H(+). The protein operates within amino-acid biosynthesis; L-threonine biosynthesis; L-threonine from L-aspartate: step 4/5. Functionally, catalyzes the ATP-dependent phosphorylation of L-homoserine to L-homoserine phosphate. In Moorella thermoacetica (strain ATCC 39073 / JCM 9320), this protein is Homoserine kinase.